The primary structure comprises 79 residues: Sec-independent protein translocase protein TatA (79 aa).

A helical membrane pass occupies residues 1 to 21 (MHMPSGTQWLIILLIVVLLFG).

Belongs to the TatA/E family. In terms of assembly, the Tat system comprises two distinct complexes: a TatABC complex, containing multiple copies of TatA, TatB and TatC subunits, and a separate TatA complex, containing only TatA subunits. Substrates initially bind to the TatABC complex, which probably triggers association of the separate TatA complex to form the active translocon.

It is found in the cell inner membrane. Functionally, part of the twin-arginine translocation (Tat) system that transports large folded proteins containing a characteristic twin-arginine motif in their signal peptide across membranes. TatA could form the protein-conducting channel of the Tat system. The protein is Sec-independent protein translocase protein TatA of Campylobacter lari (strain RM2100 / D67 / ATCC BAA-1060).